We begin with the raw amino-acid sequence, 569 residues long: Proline--tRNA ligase (569 aa).

Belongs to the class-II aminoacyl-tRNA synthetase family. ProS type 1 subfamily. As to quaternary structure, homodimer.

Its subcellular location is the cytoplasm. It catalyses the reaction tRNA(Pro) + L-proline + ATP = L-prolyl-tRNA(Pro) + AMP + diphosphate. In terms of biological role, catalyzes the attachment of proline to tRNA(Pro) in a two-step reaction: proline is first activated by ATP to form Pro-AMP and then transferred to the acceptor end of tRNA(Pro). As ProRS can inadvertently accommodate and process non-cognate amino acids such as alanine and cysteine, to avoid such errors it has two additional distinct editing activities against alanine. One activity is designated as 'pretransfer' editing and involves the tRNA(Pro)-independent hydrolysis of activated Ala-AMP. The other activity is designated 'posttransfer' editing and involves deacylation of mischarged Ala-tRNA(Pro). The misacylated Cys-tRNA(Pro) is not edited by ProRS. The polypeptide is Proline--tRNA ligase (Nitrosospira multiformis (strain ATCC 25196 / NCIMB 11849 / C 71)).